The sequence spans 260 residues: Centromere protein K (260 aa).

Residues 84 to 173 adopt a coiled-coil conformation; the sequence is EEELQKVKKE…KKLMNALGEF (90 aa).

The protein belongs to the CENP-K/MCM22 family. In terms of assembly, component of the CENPA-HI complex, at least composed of CENPH, CENPI, CENPK, CENPL, CENPM, CENPO and CENPP.

The protein resides in the nucleus. Its subcellular location is the chromosome. It localises to the centromere. It is found in the kinetochore. Its function is as follows. Component of the CENPA-HI complex, a centromeric complex involved in assembly of kinetochore proteins, mitotic progression and chromosome segregation. In Gallus gallus (Chicken), this protein is Centromere protein K (CENPK).